The sequence spans 329 residues: Ribosomal RNA small subunit methyltransferase H (329 aa).

Residues 39 to 41 (GGY), Asp57, Phe84, Asp100, and Gln107 each bind S-adenosyl-L-methionine. The segment at 285–305 (GPDKDELAQNPRSRSALLRVG) is disordered.

This sequence belongs to the methyltransferase superfamily. RsmH family.

It is found in the cytoplasm. It catalyses the reaction cytidine(1402) in 16S rRNA + S-adenosyl-L-methionine = N(4)-methylcytidine(1402) in 16S rRNA + S-adenosyl-L-homocysteine + H(+). Specifically methylates the N4 position of cytidine in position 1402 (C1402) of 16S rRNA. This Ruegeria sp. (strain TM1040) (Silicibacter sp.) protein is Ribosomal RNA small subunit methyltransferase H.